The chain runs to 426 residues: ORC1-type DNA replication protein 1 (426 aa).

ATP-binding positions include 62-66 (VGKTL), Tyr211, and Arg223.

Belongs to the CDC6/cdc18 family.

Functionally, involved in regulation of DNA replication. The chain is ORC1-type DNA replication protein 1 (cdc6a) from Haloarcula marismortui (strain ATCC 43049 / DSM 3752 / JCM 8966 / VKM B-1809) (Halobacterium marismortui).